The chain runs to 220 residues: Octanoyltransferase (220 aa).

Positions 34 to 209 (ENSQDEIWVV…TLSQELGLAN (176 aa)) constitute a BPL/LPL catalytic domain. Substrate is bound by residues 73-80 (RGGQVTYH), 140-142 (SLG), and 153-155 (GLA). C171 serves as the catalytic Acyl-thioester intermediate.

Belongs to the LipB family.

The protein resides in the cytoplasm. It catalyses the reaction octanoyl-[ACP] + L-lysyl-[protein] = N(6)-octanoyl-L-lysyl-[protein] + holo-[ACP] + H(+). The protein operates within protein modification; protein lipoylation via endogenous pathway; protein N(6)-(lipoyl)lysine from octanoyl-[acyl-carrier-protein]: step 1/2. In terms of biological role, catalyzes the transfer of endogenously produced octanoic acid from octanoyl-acyl-carrier-protein onto the lipoyl domains of lipoate-dependent enzymes. Lipoyl-ACP can also act as a substrate although octanoyl-ACP is likely to be the physiological substrate. The polypeptide is Octanoyltransferase (Shewanella piezotolerans (strain WP3 / JCM 13877)).